The chain runs to 482 residues: Membrane-bound lytic murein transglycosylase F (482 aa).

An N-terminal signal peptide occupies residues 1 to 18; that stretch reads MKGLFLRIITALALLFWA. The interval 19-267 is non-LT domain; the sequence is IDMVFPWQFL…NLKEKYLGHI (249 aa). Residues 268–482 form an LT domain region; that stretch reads SQFDYVDTRS…NLEEIKENKD (215 aa). The active site involves Glu-312. The span at 457 to 470 shows a compositional bias: polar residues; that stretch reads ENQTTNDNANNESA. Residues 457-482 form a disordered region; it reads ENQTTNDNANNESAVKNLEEIKENKD. Over residues 473 to 482 the composition is skewed to basic and acidic residues; that stretch reads NLEEIKENKD.

The protein in the N-terminal section; belongs to the bacterial solute-binding protein 3 family. This sequence in the C-terminal section; belongs to the transglycosylase Slt family.

It is found in the cell outer membrane. The catalysed reaction is Exolytic cleavage of the (1-&gt;4)-beta-glycosidic linkage between N-acetylmuramic acid (MurNAc) and N-acetylglucosamine (GlcNAc) residues in peptidoglycan, from either the reducing or the non-reducing ends of the peptidoglycan chains, with concomitant formation of a 1,6-anhydrobond in the MurNAc residue.. In terms of biological role, murein-degrading enzyme that degrades murein glycan strands and insoluble, high-molecular weight murein sacculi, with the concomitant formation of a 1,6-anhydromuramoyl product. Lytic transglycosylases (LTs) play an integral role in the metabolism of the peptidoglycan (PG) sacculus. Their lytic action creates space within the PG sacculus to allow for its expansion as well as for the insertion of various structures such as secretion systems and flagella. The protein is Membrane-bound lytic murein transglycosylase F of Haemophilus influenzae (strain 86-028NP).